The chain runs to 390 residues: MPDWLLTLLITVVKAVAVILALLTTFAYMTLVERKLLGRFQIRVGPNRVGPMGLLQPAADAIKSIFKEDLQVTLADKLVYTLAPIIAIGMALTAFGGIPAGPEGSLFGENPWVYNLDAGVLALLALTSMGVYGIFLGGWASGSKYPMLGGLRSSAQMISYELGMGLSILGLLMLVGSTRFTDIVLWQGANGWMILFQSLGFALFLISSFAETNRTPFDLVEAEQELVAGYLTEYSAIKWALFQMAEYVNMITASALMSTLFFGGWRGPGFLNGIIPGIADIPILWLVVKIGFFLFVFIWVRATLPRLRYDQLMRFGWKLLLPLALFNTMLVAGYIAFFSSWGWWPLALLSLLGLTALLALSDTVRQLWNAPMTRRETELPPVPTRSAGGD.

Helical transmembrane passes span 4–24 (WLLT…ALLT), 78–98 (LVYT…FGGI), 120–140 (VLAL…GGWA), 157–177 (MISY…LVGS), 191–211 (GWMI…SFAE), 247–266 (YVNM…GGWR), 278–298 (IADI…FVFI), 315–337 (FGWK…YIAF), and 341–360 (WGWW…LLAL).

The protein belongs to the complex I subunit 1 family. NDH-1 is composed of 15 different subunits. Subunits NuoA, H, J, K, L, M, N constitute the membrane sector of the complex.

Its subcellular location is the cell membrane. It catalyses the reaction a quinone + NADH + 5 H(+)(in) = a quinol + NAD(+) + 4 H(+)(out). Its function is as follows. NDH-1 shuttles electrons from NADH, via FMN and iron-sulfur (Fe-S) centers, to quinones in the respiratory chain. The immediate electron acceptor for the enzyme in this species is believed to be ubiquinone. Couples the redox reaction to proton translocation (for every two electrons transferred, four hydrogen ions are translocated across the cytoplasmic membrane), and thus conserves the redox energy in a proton gradient. This subunit may bind ubiquinone. The polypeptide is NADH-quinone oxidoreductase subunit H (Deinococcus deserti (strain DSM 17065 / CIP 109153 / LMG 22923 / VCD115)).